The following is a 193-amino-acid chain: Fra a 1-associated protein (193 aa).

The interval Met-1–Asp-27 is disordered.

Interacts with FRAA1E, FRAA2 and FRAA3.

This is Fra a 1-associated protein from Fragaria ananassa (Strawberry).